Reading from the N-terminus, the 377-residue chain is Lactosylceramide 1,3-N-acetyl-beta-D-glucosaminyltransferase A (377 aa).

Over 1-12 (MLISARRLRRCQ) the chain is Cytoplasmic. The chain crosses the membrane as a helical; Signal-anchor for type II membrane protein span at residues 13-30 (FLQLLASCFVLSLMALLV). Residues 31 to 377 (QEDNSLISHV…DTYPCSAAWS (347 aa)) lie on the Lumenal side of the membrane. N-linked (GlcNAc...) asparagine glycosylation is found at asparagine 56, asparagine 167, and asparagine 275.

The protein belongs to the glycosyltransferase 31 family.

It is found in the golgi apparatus membrane. It catalyses the reaction a beta-D-Gal-(1-&gt;4)-beta-D-Glc-(1&lt;-&gt;1)-Cer(d18:1(4E)) + UDP-N-acetyl-alpha-D-glucosamine = a beta-D-GlcNAc-(1-&gt;3)-beta-D-Gal-(1-&gt;4)-beta-D-Glc-(1&lt;-&gt;1)-Cer(d18:1(4E)) + UDP + H(+). The catalysed reaction is a neolactoside nLc4Cer(d18:1(4E)) + UDP-N-acetyl-alpha-D-glucosamine = a neolactoside IV(3)-beta-GlcNAc-nLc4Cer(d18:1(4E)) + UDP + H(+). Its pathway is protein modification; protein glycosylation. In terms of biological role, beta-1,3-N-acetylglucosaminyltransferase that plays a key role in the synthesis of lacto- or neolacto-series carbohydrate chains on glycolipids. This chain is Lactosylceramide 1,3-N-acetyl-beta-D-glucosaminyltransferase A (b3gnt5-a), found in Xenopus laevis (African clawed frog).